We begin with the raw amino-acid sequence, 424 residues long: MSRRYLFTSESVTEGHPDKICDQISDTILDALLTQDPSSRVAAEVVVNTGLVLITGEITTKANVNFVNLARKKIAEIGYTNADNGFSANSTSVLLALDEQSPDIAQGVNTAQETRQQDSDELFDKIGAGDQGIMFGFASNETPELMPLPISLAHRIARRLAAVRKTGELSYLRPDGKTQVTVVYEDGRPVGIDTILISTQHTATIGEITDEAAVQAKIKQDLWSAVVEPVFGDIDVKPNDQTRFLVNPTGKFVVGGPQGDSGLTGRKIIVDTYGGYSRHGGGAFSGKDPTKVDRSAAYAARYVAKNIVAAGLAEKVEIQLSYAIGVARPTSILVDTFGTGKVDEETLLELINQHFELRPAGIIHTFNLRNLPSERGGRFYQDVAAYGHFGRADLDLPWEQTDKAELLKQAANESLSAAIAQALT.

His16 contacts ATP. Asp18 contributes to the Mg(2+) binding site. Glu44 is a K(+) binding site. Residues Glu57 and Gln100 each coordinate L-methionine. The flexible loop stretch occupies residues 100–110; that stretch reads QSPDIAQGVNT. Residues 175–177, 251–252, Asp260, 266–267, Ala283, and Lys287 contribute to the ATP site; these read DGK, KF, and RK. Asp260 serves as a coordination point for L-methionine. Lys291 contacts L-methionine.

This sequence belongs to the AdoMet synthase family. In terms of assembly, homotetramer; dimer of dimers. It depends on Mg(2+) as a cofactor. Requires K(+) as cofactor.

It localises to the cytoplasm. It carries out the reaction L-methionine + ATP + H2O = S-adenosyl-L-methionine + phosphate + diphosphate. Its pathway is amino-acid biosynthesis; S-adenosyl-L-methionine biosynthesis; S-adenosyl-L-methionine from L-methionine: step 1/1. Catalyzes the formation of S-adenosylmethionine (AdoMet) from methionine and ATP. The overall synthetic reaction is composed of two sequential steps, AdoMet formation and the subsequent tripolyphosphate hydrolysis which occurs prior to release of AdoMet from the enzyme. This chain is S-adenosylmethionine synthase, found in Nostoc punctiforme (strain ATCC 29133 / PCC 73102).